The sequence spans 249 residues: tRNA (guanine-N(1)-)-methyltransferase (249 aa).

Residues glycine 117 and 137–142 each bind S-adenosyl-L-methionine; that span reads LGDFVL.

The protein belongs to the RNA methyltransferase TrmD family. In terms of assembly, homodimer.

It localises to the cytoplasm. The catalysed reaction is guanosine(37) in tRNA + S-adenosyl-L-methionine = N(1)-methylguanosine(37) in tRNA + S-adenosyl-L-homocysteine + H(+). In terms of biological role, specifically methylates guanosine-37 in various tRNAs. The polypeptide is tRNA (guanine-N(1)-)-methyltransferase (Janthinobacterium sp. (strain Marseille) (Minibacterium massiliensis)).